The primary structure comprises 615 residues: Integral inner nuclear membrane protein ima1 (615 aa).

Transmembrane regions (helical) follow at residues 192–212 (FVLWLLRGFGFSFFYLQSIVW), 247–267 (IFYFNWLGFFVVFWNPYWYKM), and 323–343 (QIHAAFFFVTICFTWISISCL). A disordered region spans residues 357–387 (ILKPRKKRQESTSSVHRIGKESSDRKDGISG). Residues 374–384 (IGKESSDRKDG) are compositionally biased toward basic and acidic residues. A run of 2 helical transmembrane segments spans residues 563–583 (AKLLIAFTILFLVGLICGWRL) and 586–606 (FTMFIYYLCILVLATYYVMKH).

The protein localises to the nucleus inner membrane. Functionally, inner nuclear membrane protein that specifically binds to heterochromatic regions and promotes the tethering of centromeric DNA to the SUN-KASH complex. Couples centromeres to the nuclear envelope, thus contributing to their association with the microtubule organizing center attachment site and to the positioning of the nucleus at the cell center by microtubules. The sequence is that of Integral inner nuclear membrane protein ima1 (IMA1) from Schizosaccharomyces pombe (strain 972 / ATCC 24843) (Fission yeast).